We begin with the raw amino-acid sequence, 601 residues long: Beta-phellandrene synthase (601 aa).

The transit peptide at 1-35 directs the protein to the chloroplast; it reads MSTISIHHVGILRNPLPSKNKRALINNPWSLSLPR. Residues D356 and D360 each contribute to the Mn(2+) site. A DDXXD motif motif is present at residues 356-360; sequence DDVYD. 2 homodimerization regions span residues 362–368 and 434–471; these read YGTLDEL and EAEWYESGYAPSLEEYLSIATISIGLIPIVIPLDLSIP. D499 and E507 together coordinate Mn(2+).

Belongs to the terpene synthase family. In terms of assembly, homodimer. Mn(2+) is required as a cofactor. It depends on Mg(2+) as a cofactor. Expressed in peltate glandular trichomes. Present at low levels in flowers and stems.

It is found in the plastid. The protein resides in the chloroplast. The catalysed reaction is (2E)-geranyl diphosphate = beta-phellandrene + diphosphate. It carries out the reaction (2E)-geranyl diphosphate = (1R,5R)-sabinene + diphosphate. It functions in the pathway secondary metabolite biosynthesis; terpenoid biosynthesis. Its function is as follows. Involved in the biosynthesis of phenolic monoterpenes natural products. Monoterpene synthase that catalyzes mainly the formation of olefins such as sabinene and beta-phellandrene, and minor amounts of other monoterpenes (e.g. myrcene, gamma-terpinene, alpha-thujene and alpha-pinene) from geranyl diphosphate (GPP). The chain is Beta-phellandrene synthase from Origanum vulgare (Wild marjoram).